Reading from the N-terminus, the 202-residue chain is FMN-dependent NADH:quinone oxidoreductase 1 (202 aa).

FMN is bound by residues S9, 15–17, 95–98, and 139–142; these read SAS, MYNF, and TSGG.

Belongs to the azoreductase type 1 family. Homodimer. Requires FMN as cofactor.

The catalysed reaction is 2 a quinone + NADH + H(+) = 2 a 1,4-benzosemiquinone + NAD(+). It carries out the reaction N,N-dimethyl-1,4-phenylenediamine + anthranilate + 2 NAD(+) = 2-(4-dimethylaminophenyl)diazenylbenzoate + 2 NADH + 2 H(+). In terms of biological role, quinone reductase that provides resistance to thiol-specific stress caused by electrophilic quinones. Functionally, also exhibits azoreductase activity. Catalyzes the reductive cleavage of the azo bond in aromatic azo compounds to the corresponding amines. The sequence is that of FMN-dependent NADH:quinone oxidoreductase 1 from Pseudomonas syringae pv. tomato (strain ATCC BAA-871 / DC3000).